Here is a 239-residue protein sequence, read N- to C-terminus: Serine protease SplC (239 aa).

Residues 1-36 (MNKNIVIKSMAALAILTSVTGINAAVVEETQQIANA) form the signal peptide. Catalysis depends on charge relay system residues His-75, Asp-113, and Ser-193.

This sequence belongs to the peptidase S1B family.

The protein resides in the secreted. This chain is Serine protease SplC (splC), found in Staphylococcus aureus.